We begin with the raw amino-acid sequence, 265 residues long: 3-methyl-2-oxobutanoate hydroxymethyltransferase (265 aa).

Residues Asp45 and Asp84 each contribute to the Mg(2+) site. 3-methyl-2-oxobutanoate is bound by residues 45–46, Asp84, and Lys112; that span reads DS. Residue Glu114 participates in Mg(2+) binding. The Proton acceptor role is filled by Glu181.

This sequence belongs to the PanB family. In terms of assembly, homodecamer; pentamer of dimers. The cofactor is Mg(2+).

The protein resides in the cytoplasm. The catalysed reaction is 3-methyl-2-oxobutanoate + (6R)-5,10-methylene-5,6,7,8-tetrahydrofolate + H2O = 2-dehydropantoate + (6S)-5,6,7,8-tetrahydrofolate. Its pathway is cofactor biosynthesis; (R)-pantothenate biosynthesis; (R)-pantoate from 3-methyl-2-oxobutanoate: step 1/2. Its function is as follows. Catalyzes the reversible reaction in which hydroxymethyl group from 5,10-methylenetetrahydrofolate is transferred onto alpha-ketoisovalerate to form ketopantoate. The chain is 3-methyl-2-oxobutanoate hydroxymethyltransferase from Pectobacterium carotovorum subsp. carotovorum (strain PC1).